The chain runs to 308 residues: MGKWTGKKVAVLYGGRSSEREVSLRTGAACADALRARGHDVTLVDVDAELPARLRELRVDVAFVALHGRWGEDGCVQGLLECMGIPYTGSGVTASAMGMDKTVSKAIFKALGLDVIEYRAFPPARAAEIDLRDLPFGVPCVVKPAGEGSSVGVQIVKDAARLADACREAARYKGDVVVERYVKGTEVNVAVLEGKALGAIEIAPANEFYDYAAKYTAGTTRYYYPARIPEAHASRVMAAAEAAHRGLGCSGVTRVDFIVAPDGTPFILEVNTLPGMTATSLVPKIAAGLGLAFPELCERILDGAALKA.

One can recognise an ATP-grasp domain in the interval 105–302 (KAIFKALGLD…FPELCERILD (198 aa)). Residue 133 to 188 (DLPFGVPCVVKPAGEGSSVGVQIVKDAARLADACREAARYKGDVVVERYVKGTEVN) participates in ATP binding. Positions 256, 269, and 271 each coordinate Mg(2+).

This sequence belongs to the D-alanine--D-alanine ligase family. Requires Mg(2+) as cofactor. Mn(2+) serves as cofactor.

Its subcellular location is the cytoplasm. The enzyme catalyses 2 D-alanine + ATP = D-alanyl-D-alanine + ADP + phosphate + H(+). Its pathway is cell wall biogenesis; peptidoglycan biosynthesis. Cell wall formation. The protein is D-alanine--D-alanine ligase of Anaeromyxobacter sp. (strain Fw109-5).